The chain runs to 240 residues: Ribonuclease HII (240 aa).

In terms of domain architecture, RNase H type-2 spans 7–215 (RYAIGIDEAG…LKRIAPGWYV (209 aa)). A divalent metal cation-binding residues include Asp-13, Glu-14, and Asp-112.

The protein belongs to the RNase HII family. The cofactor is Mn(2+). It depends on Mg(2+) as a cofactor.

The protein localises to the cytoplasm. The enzyme catalyses Endonucleolytic cleavage to 5'-phosphomonoester.. In terms of biological role, endonuclease that specifically degrades the RNA of RNA-DNA hybrids. This is Ribonuclease HII from Hyperthermus butylicus (strain DSM 5456 / JCM 9403 / PLM1-5).